Reading from the N-terminus, the 446-residue chain is NADH oxidase (446 aa).

Residues 7–11 (GCTHA), glutamate 32, cysteine 42, valine 79, 110–113 (TTGS), lysine 132, and tyrosine 157 contribute to the FAD site. Histidine 10 acts as the Proton acceptor in catalysis. Cysteine 42 acts as the Redox-active in catalysis. The residue at position 42 (cysteine 42) is a Cysteine sulfinic acid (-SO2H). Residues 150-165 (VVVV…LVEA), aspartate 177, tyrosine 186, and glycine 243 contribute to the NAD(+) site. Residues 271 to 281 (TSNPDIFAAGD), leucine 298, alanine 299, and threonine 300 contribute to the FAD site. Residue glycine 328 participates in NAD(+) binding. Phenylalanine 424 is an FAD binding site.

The protein belongs to the class-III pyridine nucleotide-disulfide oxidoreductase family. In terms of assembly, homodimer. FAD serves as cofactor. Post-translationally, the N-terminus is blocked.

It carries out the reaction 2 NADH + O2 + 2 H(+) = 2 NAD(+) + 2 H2O. In terms of biological role, catalyzes the four-electron reduction of molecular oxygen to water. The polypeptide is NADH oxidase (nox) (Enterococcus faecalis (strain ATCC 700802 / V583)).